The chain runs to 131 residues: MATVPTRSGSPRQLTTKQTGDAWEAQARRWLEGKGLRFIAANVNERGGEIDLIMREGRTTIFIEVRYRRSALYGGAAASVTRSKQHKLLQTARLWLARHNGSFDTVDCRFDVVAFTGNEVEWIKDAFNDHS.

Polar residues predominate over residues 1–19 (MATVPTRSGSPRQLTTKQT). The segment at 1–21 (MATVPTRSGSPRQLTTKQTGD) is disordered.

This sequence belongs to the UPF0102 family.

This is UPF0102 protein YraN from Escherichia coli O127:H6 (strain E2348/69 / EPEC).